Here is a 94-residue protein sequence, read N- to C-terminus: Co-chaperonin GroES (94 aa).

This sequence belongs to the GroES chaperonin family. Heptamer of 7 subunits arranged in a ring. Interacts with the chaperonin GroEL.

The protein localises to the cytoplasm. Functionally, together with the chaperonin GroEL, plays an essential role in assisting protein folding. The GroEL-GroES system forms a nano-cage that allows encapsulation of the non-native substrate proteins and provides a physical environment optimized to promote and accelerate protein folding. GroES binds to the apical surface of the GroEL ring, thereby capping the opening of the GroEL channel. The polypeptide is Co-chaperonin GroES (Bacillus pumilus (strain SAFR-032)).